The following is a 441-amino-acid chain: Ribosomal protein uS12 methylthiotransferase RimO (441 aa).

Residues 8–118 enclose the MTTase N-terminal domain; it reads PKIGFVSLGC…VLQHVHHYVP (111 aa). [4Fe-4S] cluster-binding residues include cysteine 17, cysteine 53, cysteine 82, cysteine 150, cysteine 154, and cysteine 157. Positions 136 to 373 constitute a Radical SAM core domain; that stretch reads LTPRHYAYLK…MQLQQQISAE (238 aa). Residues 376–441 form the TRAM domain; that stretch reads QEKVGREILV…DEYDLWGSRV (66 aa).

The protein belongs to the methylthiotransferase family. RimO subfamily. The cofactor is [4Fe-4S] cluster.

The protein resides in the cytoplasm. The catalysed reaction is L-aspartate(89)-[ribosomal protein uS12]-hydrogen + (sulfur carrier)-SH + AH2 + 2 S-adenosyl-L-methionine = 3-methylsulfanyl-L-aspartate(89)-[ribosomal protein uS12]-hydrogen + (sulfur carrier)-H + 5'-deoxyadenosine + L-methionine + A + S-adenosyl-L-homocysteine + 2 H(+). Functionally, catalyzes the methylthiolation of an aspartic acid residue of ribosomal protein uS12. The protein is Ribosomal protein uS12 methylthiotransferase RimO of Salmonella arizonae (strain ATCC BAA-731 / CDC346-86 / RSK2980).